Here is a 508-residue protein sequence, read N- to C-terminus: Dihydroniloticin synthase CYP71CD4 (508 aa).

The chain crosses the membrane as a helical span at residues 6–26 (LDFFSVTSFIIFFLFLFRLVW). Cysteine 449 contacts heme.

Belongs to the cytochrome P450 family. Heme serves as cofactor. Mainly expressed in roots and, to a lesser extent, in stems.

It is found in the membrane. The catalysed reaction is tirucalla-7,24-dien-3beta-ol + 2 reduced [NADPH--hemoprotein reductase] + 2 O2 = dihydroniloticin + 2 oxidized [NADPH--hemoprotein reductase] + 2 H2O + 2 H(+). It functions in the pathway secondary metabolite biosynthesis; terpenoid biosynthesis. Functionally, monooxygenase involved in the biosynthesis of quassinoids triterpene natural products such as ailanthone, chaparrinone, glaucarubinone and amarolide, allelopathic degraded triterpene lactones inhibiting the growth of other plants, and possessing antimalarial, antifeedant, insecticidal, anti-inflammatory and anticancer activities. Catalyzes the conversion of tirucalladienol to dihydroniloticin. The protein is Dihydroniloticin synthase CYP71CD4 of Ailanthus altissima (Tree-of-heaven).